The chain runs to 310 residues: Putative HTH-type transcriptional regulatory protein SSO0942 (310 aa).

Residues 125–180 (LKHKREEMGYSIGDVAKFLGVSRKAIYDYEKGDSDVSLEVAEKLIDLFGDDIIGDV) form the HTH cro/C1-type domain. A DNA-binding region (H-T-H motif) is located at residues 136-155 (IGDVAKFLGVSRKAIYDYEK).

The sequence is that of Putative HTH-type transcriptional regulatory protein SSO0942 from Saccharolobus solfataricus (strain ATCC 35092 / DSM 1617 / JCM 11322 / P2) (Sulfolobus solfataricus).